The following is a 367-amino-acid chain: Peptide chain release factor 2 (367 aa).

Q254 carries the post-translational modification N5-methylglutamine.

It belongs to the prokaryotic/mitochondrial release factor family. Methylated by PrmC. Methylation increases the termination efficiency of RF2.

The protein resides in the cytoplasm. Functionally, peptide chain release factor 2 directs the termination of translation in response to the peptide chain termination codons UGA and UAA. The chain is Peptide chain release factor 2 from Leptospira borgpetersenii serovar Hardjo-bovis (strain JB197).